Reading from the N-terminus, the 270-residue chain is Glucosamine-6-phosphate deaminase (270 aa).

Catalysis depends on Asp-72, which acts as the Proton acceptor; for enolization step. The active-site For ring-opening step is Asp-141. The Proton acceptor; for ring-opening step role is filled by His-143. Residue Glu-148 is the For ring-opening step of the active site.

Belongs to the glucosamine/galactosamine-6-phosphate isomerase family. NagB subfamily. As to quaternary structure, homohexamer.

The catalysed reaction is alpha-D-glucosamine 6-phosphate + H2O = beta-D-fructose 6-phosphate + NH4(+). Its pathway is amino-sugar metabolism; N-acetylneuraminate degradation; D-fructose 6-phosphate from N-acetylneuraminate: step 5/5. With respect to regulation, allosterically activated by N-acetylglucosamine 6-phosphate (GlcNAc6P). Catalyzes the reversible isomerization-deamination of glucosamine 6-phosphate (GlcN6P) to form fructose 6-phosphate (Fru6P) and ammonium ion. This is Glucosamine-6-phosphate deaminase from Haemophilus influenzae (strain PittEE).